The sequence spans 1843 residues: Nonribosomal peptide synthetase SIDD (1843 aa).

Residues 1–83 (MLSIDDHGGG…QQQQQQQQRS (83 aa)) are disordered. Residues 65–81 (QQQQQQQQQQQQQQQQQ) show a composition bias toward low complexity. The tract at residues 133–528 (TYSELEHLST…TEVEHHIQTC (396 aa)) is adenylation 1. A disordered region spans residues 628–647 (KLGATHADEGPQEEPETDAE). One can recognise a Carrier 1 domain in the interval 641–716 (EPETDAEKKL…AMANKSTSIS (76 aa)). At Ser-677 the chain carries O-(pantetheine 4'-phosphoryl)serine. The tract at residues 753 to 1175 (VEDVYPCTPL…ALSDDDAAAL (423 aa)) is condensation 1. The Carrier 2 domain maps to 1289-1365 (SATSQRQRRL…EMAAVMECTD (77 aa)). Ser-1326 carries the post-translational modification O-(pantetheine 4'-phosphoryl)serine. The condensation 2 stretch occupies residues 1447 to 1734 (FFDGPVDLRR…LREIAENCGL (288 aa)).

The protein belongs to the NRP synthetase family. It depends on pantetheine 4'-phosphate as a cofactor.

Its pathway is siderophore biosynthesis. Nonribosomal peptide synthetase; part of the gene cluster that mediates the biosynthesis of at least 11 siderophores, including beauverichelin A, dimerumic acid (DA), Na-dimethyl coprogen (NADC), eleutherazine B, ferricrocin (FC), fusarinine A, fusarinine C (FsC), metachelin A, mevalonolactone, rhodotorulic acid (RA) and tenellin. This cocktail of siderophores for iron metabolism is essential for virulence, and more specifically for the fungal virulence in penetrating through the host cuticle. Siderophore synthesis is also involved in conidial germination under iron-deficient conditions. SIDC catalyzes the assembly of ferricrocin whereas SIDD catalyzes the assembly of fusarinine C. This chain is Nonribosomal peptide synthetase SIDD, found in Beauveria bassiana (strain ARSEF 2860) (White muscardine disease fungus).